Reading from the N-terminus, the 350-residue chain is MNKSYSLREIVSTLGGELLGKDDVLISRVASLANAQPGQISFLTDSKYRSVLATTNASAVILTPQNRDITALPRILTDNPYAYFAKVSDLLNPKPEYVAGVDDTAVIAPSAQVPASCTIMAKAVVGANVVLGEHVVVHPGCVIGEGVEIGAHSVLHANVTIYHHCMIGERCNIFSGSVIGGDGFGYAPEEGRWVKIPQVGRVVIEHDVDIGANTTIDRGAIDDTIIHEGCKIDNLVQIGHNCRIGAHSVIAGCVGIAGSAVLGKHCRIGGAAMILGHLEIADGVTVSPGSMITRSLMKAGTYTALMPFQSHDEWLRTAAGIRRLGELAERVKQLEKQLAPQQVSGIQRDK.

The Proton acceptor role is filled by H240.

It belongs to the transferase hexapeptide repeat family. LpxD subfamily. As to quaternary structure, homotrimer.

It catalyses the reaction a UDP-3-O-[(3R)-3-hydroxyacyl]-alpha-D-glucosamine + a (3R)-hydroxyacyl-[ACP] = a UDP-2-N,3-O-bis[(3R)-3-hydroxyacyl]-alpha-D-glucosamine + holo-[ACP] + H(+). It participates in bacterial outer membrane biogenesis; LPS lipid A biosynthesis. Functionally, catalyzes the N-acylation of UDP-3-O-acylglucosamine using 3-hydroxyacyl-ACP as the acyl donor. Is involved in the biosynthesis of lipid A, a phosphorylated glycolipid that anchors the lipopolysaccharide to the outer membrane of the cell. The protein is UDP-3-O-acylglucosamine N-acyltransferase of Methylobacillus flagellatus (strain ATCC 51484 / DSM 6875 / VKM B-1610 / KT).